A 481-amino-acid polypeptide reads, in one-letter code: Protein DETOXIFICATION 12 (481 aa).

Transmembrane regions (helical) follow at residues leucine 38–valine 58, leucine 76–leucine 96, tyrosine 117–methionine 137, alanine 154–leucine 174, leucine 187–tyrosine 207, leucine 214–phenylalanine 234, alanine 267–leucine 287, valine 296–alanine 316, isoleucine 336–leucine 356, methionine 380–isoleucine 400, leucine 415–leucine 435, and valine 438–valine 458.

This sequence belongs to the multi antimicrobial extrusion (MATE) (TC 2.A.66.1) family.

The protein resides in the membrane. The sequence is that of Protein DETOXIFICATION 12 from Arabidopsis thaliana (Mouse-ear cress).